A 128-amino-acid chain; its full sequence is Large ribosomal subunit protein bL17 (128 aa).

The protein belongs to the bacterial ribosomal protein bL17 family. Part of the 50S ribosomal subunit. Contacts protein L32.

This is Large ribosomal subunit protein bL17 from Pseudomonas syringae pv. syringae (strain B728a).